The chain runs to 189 residues: ATP-dependent protease subunit HslV (189 aa).

Residue threonine 12 is part of the active site. The Na(+) site is built by serine 172, cysteine 175, and threonine 178.

Belongs to the peptidase T1B family. HslV subfamily. As to quaternary structure, a double ring-shaped homohexamer of HslV is capped on each side by a ring-shaped HslU homohexamer. The assembly of the HslU/HslV complex is dependent on binding of ATP.

The protein resides in the cytoplasm. It catalyses the reaction ATP-dependent cleavage of peptide bonds with broad specificity.. Its activity is regulated as follows. Allosterically activated by HslU binding. Functionally, protease subunit of a proteasome-like degradation complex believed to be a general protein degrading machinery. The chain is ATP-dependent protease subunit HslV from Ehrlichia canis (strain Jake).